The following is a 108-amino-acid chain: MLDKKFHVKKGDTVSVIAGKDKSKTGKVIRILPKKDGVLVEGLNMVKRHMRARGNEPGGIVEKENPLHVSNVMLYCDKCKKPVRSKMNVLEDGKKVRVCIKCGDSFDK.

This sequence belongs to the universal ribosomal protein uL24 family. In terms of assembly, part of the 50S ribosomal subunit.

Functionally, one of two assembly initiator proteins, it binds directly to the 5'-end of the 23S rRNA, where it nucleates assembly of the 50S subunit. In terms of biological role, one of the proteins that surrounds the polypeptide exit tunnel on the outside of the subunit. The chain is Large ribosomal subunit protein uL24 from Geobacter metallireducens (strain ATCC 53774 / DSM 7210 / GS-15).